Consider the following 141-residue polypeptide: Large ribosomal subunit protein uL11 (141 aa).

This sequence belongs to the universal ribosomal protein uL11 family. In terms of assembly, part of the ribosomal stalk of the 50S ribosomal subunit. Interacts with L10 and the large rRNA to form the base of the stalk. L10 forms an elongated spine to which L12 dimers bind in a sequential fashion forming a multimeric L10(L12)X complex. One or more lysine residues are methylated.

In terms of biological role, forms part of the ribosomal stalk which helps the ribosome interact with GTP-bound translation factors. The polypeptide is Large ribosomal subunit protein uL11 (Nitratiruptor sp. (strain SB155-2)).